The primary structure comprises 120 residues: Ribonuclease P protein component (120 aa).

It belongs to the RnpA family. As to quaternary structure, consists of a catalytic RNA component (M1 or rnpB) and a protein subunit.

The catalysed reaction is Endonucleolytic cleavage of RNA, removing 5'-extranucleotides from tRNA precursor.. Functionally, RNaseP catalyzes the removal of the 5'-leader sequence from pre-tRNA to produce the mature 5'-terminus. It can also cleave other RNA substrates such as 4.5S RNA. The protein component plays an auxiliary but essential role in vivo by binding to the 5'-leader sequence and broadening the substrate specificity of the ribozyme. The polypeptide is Ribonuclease P protein component (Microcystis aeruginosa (strain NIES-843 / IAM M-2473)).